Reading from the N-terminus, the 157-residue chain is 6,7-dimethyl-8-ribityllumazine synthase (157 aa).

5-amino-6-(D-ribitylamino)uracil contacts are provided by residues Phe-25, 59–61, and 83–85; these read AME and AII. (2S)-2-hydroxy-3-oxobutyl phosphate is bound at residue 88–89; it reads ST. The active-site Proton donor is His-91. A 5-amino-6-(D-ribitylamino)uracil-binding site is contributed by Phe-116. A (2S)-2-hydroxy-3-oxobutyl phosphate-binding site is contributed by Arg-130.

The protein belongs to the DMRL synthase family.

It carries out the reaction (2S)-2-hydroxy-3-oxobutyl phosphate + 5-amino-6-(D-ribitylamino)uracil = 6,7-dimethyl-8-(1-D-ribityl)lumazine + phosphate + 2 H2O + H(+). It functions in the pathway cofactor biosynthesis; riboflavin biosynthesis; riboflavin from 2-hydroxy-3-oxobutyl phosphate and 5-amino-6-(D-ribitylamino)uracil: step 1/2. Catalyzes the formation of 6,7-dimethyl-8-ribityllumazine by condensation of 5-amino-6-(D-ribitylamino)uracil with 3,4-dihydroxy-2-butanone 4-phosphate. This is the penultimate step in the biosynthesis of riboflavin. This chain is 6,7-dimethyl-8-ribityllumazine synthase, found in Lawsonia intracellularis (strain PHE/MN1-00).